We begin with the raw amino-acid sequence, 146 residues long: Anti-sigma F factor (146 aa).

The protein belongs to the anti-sigma-factor family.

The enzyme catalyses L-seryl-[protein] + ATP = O-phospho-L-seryl-[protein] + ADP + H(+). It carries out the reaction L-threonyl-[protein] + ATP = O-phospho-L-threonyl-[protein] + ADP + H(+). Functionally, binds to sigma F and blocks its ability to form an RNA polymerase holoenzyme (E-sigma F). Phosphorylates SpoIIAA on a serine residue. This phosphorylation may enable SpoIIAA to act as an anti-anti-sigma factor that counteracts SpoIIAB and thus releases sigma F from inhibition. In Bacillus subtilis (strain 168), this protein is Anti-sigma F factor (spoIIAB).